A 754-amino-acid polypeptide reads, in one-letter code: Deadenylation-dependent mRNA-decapping factor pdc2 (754 aa).

The interval 499–754 is interaction with lsm1; sequence LESIWKALYI…MGLDARQLSA (256 aa).

This sequence belongs to the PAT1 family. As to quaternary structure, interacts with dcp2. Interacts with lsm1; via C-terminus.

It localises to the cytoplasm. Its subcellular location is the nucleus. The protein localises to the P-body. Its function is as follows. Activator of decapping that functions as a general and active mechanism of translational repression and required for P-body formation. Stabilizes the 3' terminus of mRNAs and modulates the rates of mRNA-decapping that occur following deadenylation. Might be required for promoting the formation or the stabilization of the preinitiation translation complexes. Necessary for accurate chromosome transmission during cell division. Together with lsm1, recruits the deadenylase ccr4 to P-bodies. The sequence is that of Deadenylation-dependent mRNA-decapping factor pdc2 from Schizosaccharomyces pombe (strain 972 / ATCC 24843) (Fission yeast).